The primary structure comprises 369 residues: Endophilin-A (369 aa).

The 231-residue stretch at 18–248 (TEKMGGAEGT…LQEKRSEAES (231 aa)) folds into the BAR domain. Residues 227 to 247 (QCADVLRGLQETLQEKRSEAE) are a coiled coil. Residues 266–295 (GGGGGLNEDGTPSHISSSASPLPSPMRSPA) are disordered. Residues 277–294 (PSHISSSASPLPSPMRSP) are compositionally biased toward low complexity. Positions 305-364 (QQQPCCQALYDFEPENPGELAFKENDIITLLNRVDDNWFEGAVNGRTGYFPQSYVQVQVP) constitute an SH3 domain.

This sequence belongs to the endophilin family.

Its subcellular location is the cytoplasm. The protein localises to the membrane. Required presynaptically at the neuromuscular junction. Implicated in synaptic vesicle endocytosis. This is Endophilin-A from Drosophila erecta (Fruit fly).